A 245-amino-acid chain; its full sequence is tRNA pseudouridine synthase A (245 aa).

Asp-52 (nucleophile) is an active-site residue. Residue Tyr-110 coordinates substrate.

This sequence belongs to the tRNA pseudouridine synthase TruA family. As to quaternary structure, homodimer.

It carries out the reaction uridine(38/39/40) in tRNA = pseudouridine(38/39/40) in tRNA. Functionally, formation of pseudouridine at positions 38, 39 and 40 in the anticodon stem and loop of transfer RNAs. The chain is tRNA pseudouridine synthase A from Ruminiclostridium cellulolyticum (strain ATCC 35319 / DSM 5812 / JCM 6584 / H10) (Clostridium cellulolyticum).